An 883-amino-acid chain; its full sequence is Aldehyde-alcohol dehydrogenase (883 aa).

Positions 13–456 are aldehyde dehydrogenase; it reads KLVAEKHVDE…DNVSAINLLN (444 aa). NAD(+) is bound by residues 121-126, glycine 206, and glycine 224; that span reads ITPTTN. Cysteine 257 serves as the catalytic Nucleophile. Residues glutamate 355, leucine 435, and 438–443 each bind NAD(+); that span reads GSYGRN. The interval 457-464 is linker; that stretch reads IKKVGRRR. Residues aspartate 500, aspartate 534, 561–565, 612–613, valine 625, lysine 634, and leucine 653 contribute to the NAD(+) site; these read GSPMD and TT. 4 residues coordinate Fe cation: aspartate 668, histidine 672, histidine 736, and histidine 750.

In the N-terminal section; belongs to the aldehyde dehydrogenase family. The protein in the C-terminal section; belongs to the iron-containing alcohol dehydrogenase family. It depends on Fe(2+) as a cofactor.

It catalyses the reaction an aldehyde + NAD(+) + H2O = a carboxylate + NADH + 2 H(+). The enzyme catalyses ethanol + NAD(+) = acetaldehyde + NADH + H(+). Functionally, has alcohol dehydrogenase activity. Has aldehyde dehydrogenase activity. Plays a role in enhancing virulence in mice, under ethanol stress conditions, perhaps by inducing expression of pneumolysin (Ply) and increasing production of hydrogen peroxide H(2)O(2). May be considered a potential virulence factor. This chain is Aldehyde-alcohol dehydrogenase, found in Streptococcus pneumoniae serotype 2 (strain D39 / NCTC 7466).